Here is a 1228-residue protein sequence, read N- to C-terminus: Structural maintenance of chromosomes protein 1 (1228 aa).

Residue 32 to 39 coordinates ATP; sequence GPNGAGKS. Positions 197–510 form a coiled coil; it reads NKKRGINAEL…ESKQDAKKRE (314 aa). Residues 522–635 enclose the SMC hinge domain; it reads VKGRIIDLCT…CDSMTVARDL (114 aa). Coiled-coil stretches lie at residues 710-783, 814-926, and 984-1068; these read KLHS…KIFS, EFTK…EIDR, and VEVD…KRLQ.

It belongs to the SMC family. SMC1 subfamily. Cohesin complexes are composed of the psm1/smc1 and psm3/smc3 heterodimer attached via their SMC hinge domain, rad21/scc1 which link them, and psc3/scc3, which interacts with rad21.

It localises to the nucleus. The protein localises to the chromosome. Involved in chromosome cohesion during cell cycle and in DNA repair. Central component of cohesin complex. The cohesin complex is required for the cohesion of sister chromatids after DNA replication. The cohesin complex apparently forms a large proteinaceous ring within which sister chromatids can be trapped. At anaphase, the complex is cleaved and dissociates from chromatin, allowing sister chromatids to segregate. In Schizosaccharomyces pombe (strain 972 / ATCC 24843) (Fission yeast), this protein is Structural maintenance of chromosomes protein 1 (psm1).